A 1446-amino-acid polypeptide reads, in one-letter code: Toll-like receptor 7 (1446 aa).

The signal sequence occupies residues 1–16; that stretch reads MAAILLLLLGFSWSLA. Over 17 to 1049 the chain is Extracellular; it reads VESALAPKES…QHGIPESYIP (1033 aa). LRR repeat units follow at residues 133–156, 158–180, 188–211, 213–235, 246–270, 271–294, 295–318, 320–342, 344–368, 369–392, 393–416, 417–440, 442–464, 465–488, 489–511, 513–535, 536–559, 561–582, 584–605, 606–629, 631–652, 653–675, and 677–699; these read LQTLEALRLDSCKLLQLPNNAFEG, ATLKSLRLSTHNSEWGPTRTLEL, LKQLTDLDLGDNNLRQLPSGFLCP, GNLQVLNLTRNRIRTAEQMGFAD, GSELQVLDASHNELRSISESWGISR, LRRLQHLNLAYNNLSELSGEALAG, LASLRIVNLSNNHLETLPEGLFAG, KELREIHLQQNELYELPKGLFHR, EQLLVVDLSGNQLTSNHVDNTTFAG, LIRLIVLNLAHNALTRIDYRTFKE, LYFLQILNLRNNSIGHIEDNAFLP, LYNLHTLNLAENRLHTLDDKLFNG, YVLSKLTLNNNLISVVEPAVFKN, CSDLKELDLSSNQLNEVPRALQDL, AMLRTLDLGENQIRTFDNQSFKN, HQLTGLRLIDNQIGNITVGMFQD, LPRLSVLNLAKNRIQSIERGSFDK, FELEAIRLDRNFLADINGVFAT, VSLLWLNLSENHLVWFDYAFIP, SNLKWLDIHGNYIEALGNYYKLQE, IRVKTLDASHNRITEIGPMSIP, NTIELLFINNNLIGNVQPNAFVD, and ANLARVDLYANQLSKLQLQQLRV. Residues 716-773 form the LRRCT domain; it reads NPFECDCTMDWLQRINNLTTRQHPRVMDMANIECVMPHARGAAVRPLSGLRPQDFLCR. 3 disulfide bridges follow: C722/C772, C796/C802, and C800/C815. LRR repeat units lie at residues 828 to 851, 852 to 875, 876 to 899, 900 to 923, 925 to 947, and 951 to 979; these read PMDSSVVYLDGNNFPVLKNHAFIG, RKNLRALYVNGSQVAAIQNRTFAS, LASLQLLHLADNKLRTLHGYEFEQ, LSALRELYLQNNQLTTIENATLAP, AALELIRIDGNRLVTLPIWQMHA, and GTRLKSISLGRNQWSCRCQFLQALTSYVA. C966 and C993 are joined by a disulfide. The helical transmembrane segment at 1050–1070 threads the bilayer; it reads LLAAALALLFLLVVIAMVFAF. Topologically, residues 1071–1446 are cytoplasmic; it reads RESLRIWLFA…QGPHVQAYLV (376 aa). Residues 1096–1233 enclose the TIR domain; sequence KLYDAVLLHS…HFWEKLRYAL (138 aa). Disordered regions lie at residues 1301–1332 and 1388–1446; these read QNYSTATTATPSPRPQRRGEQPGSGSGGNHHL and RPKR…AYLV. A compositionally biased stretch (polar residues) spans 1395-1413; that stretch reads HLQQAQAGTLGSKASQAAH. Over residues 1414–1426 the composition is skewed to low complexity; sequence QQQQQQQQQQQQQ. The segment covering 1427-1439 has biased composition (polar residues); that stretch reads PNPTAVSGQQQGP.

It belongs to the Toll-like receptor family. In terms of tissue distribution, expressed in the fan-shaped body and the ellipsoid body, which are components of the locomotion center in the CNS (at protein level).

Its subcellular location is the cell membrane. In terms of biological role, toll-related receptor which binds to the neurotrophins NT1 and spz5. Essential for antiviral autophagy, it detects and binds to the vesicular stomatitis virus (vsv) following infection. This role is likely to be independent of the canonical Toll, immune deficiency, and JAK-STAT signaling pathways. Functions in olfactory circuit assembly by promoting synaptic partner matching between olfactory receptor neurons (ORN) axons and projection neurons (PN) dendrites partners in the antennal lobe. Function in the Va1d ORNs is necessary and sufficient for correct targeting to their partner PN dendrites. Also involved in the targeting of other classes of ORN axons. Functions with Toll-6 to regulate motor axon targeting and neuronal survival in the central nervous system (CNS). May be an upstream component of the NF-kappa-B (rel) regulatory cascade. This Drosophila melanogaster (Fruit fly) protein is Toll-like receptor 7.